Here is a 54-residue protein sequence, read N- to C-terminus: U1-ctenitoxin-Pr1a (54 aa).

Intrachain disulfides connect C2-C19, C9-C25, C16-C51, C18-C39, and C27-C37.

As to expression, expressed by the venom gland.

The protein resides in the secreted. Its function is as follows. Omega-agatoxins are antagonists of voltage-gated calcium channels (Cav). Causes rapid general flaccid paralysis followed by death in 10-30 minutes when injected in mice at dose levels of 5 ug per mouse. This Phoneutria reidyi (Brazilian Amazonian armed spider) protein is U1-ctenitoxin-Pr1a.